A 281-amino-acid polypeptide reads, in one-letter code: Bifunctional protein FolD (281 aa).

NADP(+) is bound by residues 161-163 (GRS), Ser186, and Ile227.

This sequence belongs to the tetrahydrofolate dehydrogenase/cyclohydrolase family. In terms of assembly, homodimer.

The catalysed reaction is (6R)-5,10-methylene-5,6,7,8-tetrahydrofolate + NADP(+) = (6R)-5,10-methenyltetrahydrofolate + NADPH. The enzyme catalyses (6R)-5,10-methenyltetrahydrofolate + H2O = (6R)-10-formyltetrahydrofolate + H(+). It functions in the pathway one-carbon metabolism; tetrahydrofolate interconversion. Functionally, catalyzes the oxidation of 5,10-methylenetetrahydrofolate to 5,10-methenyltetrahydrofolate and then the hydrolysis of 5,10-methenyltetrahydrofolate to 10-formyltetrahydrofolate. In Brachyspira hyodysenteriae (strain ATCC 49526 / WA1), this protein is Bifunctional protein FolD.